Consider the following 121-residue polypeptide: MSAESFNISAIRENKLLARREVLVEVSHHKAPTPTRKDLREWVAKQLGVDVSSVFIRKIKTEYGIGKSVAEVHVYSDSKMARIIEPLYILARNLGEEGKKLLEEVKKKRSERREKKRKRKK.

This sequence belongs to the eukaryotic ribosomal protein eS24 family.

This Pyrobaculum arsenaticum (strain DSM 13514 / JCM 11321 / PZ6) protein is Small ribosomal subunit protein eS24.